Reading from the N-terminus, the 162-residue chain is Ribosome maturation factor RimP (162 aa).

Belongs to the RimP family.

The protein resides in the cytoplasm. Functionally, required for maturation of 30S ribosomal subunits. The sequence is that of Ribosome maturation factor RimP from Cupriavidus taiwanensis (strain DSM 17343 / BCRC 17206 / CCUG 44338 / CIP 107171 / LMG 19424 / R1) (Ralstonia taiwanensis (strain LMG 19424)).